A 348-amino-acid chain; its full sequence is MPHIDNDVKLDFKDVLLRPKRSTLKSRSEVDLTRSFSFRNSKQTYSGVPIIAANMDTVGTFEMAKVLCKFSLFTAVHKHYSLVQWQEFAGQNPDCLEHLAASSGTGSSDFEQLEQILEAIPQVKYICLDVANGYSEHFVEFVKDVRKRFPQHTIMAGNVVTGEMVEELILSGADIIKVGIGPGSVCTTRKKTGVGYPQLSAVMECADAAHGLKGHIISDGGCSCPGDVAKAFGAGADFVMLGGMLAGHSESGGELIERDGKKYKLFYGMSSEMAMKKYAGGVAEYRASEGKTVEVPFKGDVEHTIRDILGGIRSTCTYVGAAKLKELSRRTTFIRVTQQVNPIFSEAC.

Residues 26–27 (SR), Lys-78, 129–131 (DVA), and 180–181 (IG) contribute to the NADP(+) site. 3 residues coordinate K(+): Gly-181, Gly-183, and Cys-186. Residue Cys-186 is the Thioimidate intermediate of the active site. Thr-188 acts as the Proton donor/acceptor in catalysis. Arg-189 contributes to the K(+) binding site. GMP-binding positions include 219 to 221 (DGG), 242 to 243 (GG), 268 to 270 (GMS), and 286 to 290 (RASEG). NADP(+) is bound by residues Met-269 and 285-286 (YR). Lys-291 bears the N6-acetyllysine mark. 314-317 (STCT) serves as a coordination point for NADP(+).

It belongs to the IMPDH/GMPR family. GuaC type 1 subfamily. As to quaternary structure, homotetramer. As to expression, highly expressed in heart, skeletal muscle, kidney, brain, liver, prostate, spleen, placenta, testis and ovary. Low expression in colon, thymus and peripheral blood leukocytes.

It carries out the reaction IMP + NH4(+) + NADP(+) = GMP + NADPH + 2 H(+). Functionally, catalyzes the irreversible NADPH-dependent deamination of GMP to IMP. It functions in the conversion of nucleobase, nucleoside and nucleotide derivatives of G to A nucleotides, and in maintaining the intracellular balance of A and G nucleotides. Plays a role in modulating cellular differentiation. This chain is GMP reductase 2, found in Homo sapiens (Human).